The following is a 261-amino-acid chain: Hemin import ATP-binding protein HmuV (261 aa).

In terms of domain architecture, ABC transporter spans 2–243 (LCANNVSAQI…ALLKRVYNIN (242 aa)). An ATP-binding site is contributed by 34 to 41 (GPNGAGKS).

Belongs to the ABC transporter superfamily. Heme (hemin) importer (TC 3.A.1.14.5) family. The complex is composed of two ATP-binding proteins (HmuV), two transmembrane proteins (HmuU) and a solute-binding protein (HmuT).

The protein localises to the cell inner membrane. Part of the ABC transporter complex HmuTUV involved in hemin import. Responsible for energy coupling to the transport system. The chain is Hemin import ATP-binding protein HmuV from Pseudoalteromonas translucida (strain TAC 125).